A 737-amino-acid chain; its full sequence is Envelope glycoprotein H (737 aa).

The N-terminal stretch at 1-25 (MLIRRRALWLTIPILIIMTSHKIMC) is a signal peptide. At 26–702 (AFDLSHVHSE…NFFLFSSKSP (677 aa)) the chain is on the virion surface side. N62, N212, N365, N412, N448, N465, N544, N569, N603, and N683 each carry an N-linked (GlcNAc...) asparagine; by host glycan. The tract at residues 191–253 (GSVTLFGHIT…MMMYDDFEII (63 aa)) is interaction with gL. The chain crosses the membrane as a helical span at residues 703–723 (GAIVLYIIIISLIVWTLYEII). The Intravirion segment spans residues 724–737 (KLFCYKRQWQYQKL).

Belongs to the herpesviridae glycoprotein H family. Interacts with glycoprotein L (gL); this interaction is necessary for the correct processing and cell surface expression of gH. The heterodimer gH/gL seems to interact with gB trimers during fusion. In terms of processing, N-glycosylated, O-glycosylated, and sialylated.

The protein resides in the virion membrane. It is found in the host cell membrane. The protein localises to the host endosome membrane. Its function is as follows. The heterodimer glycoprotein H-glycoprotein L is required for the fusion of viral and plasma membranes leading to virus entry into the host cell. Following initial binding to host receptor, membrane fusion is mediated by the fusion machinery composed of gB and the heterodimer gH/gL. May also be involved in the fusion between the virion envelope and the outer nuclear membrane during virion morphogenesis. This chain is Envelope glycoprotein H, found in Elephantid herpesvirus 1 (isolate Asian elephant/Berlin/Kiba/1998) (EIHV-1).